We begin with the raw amino-acid sequence, 215 residues long: 3,4-dihydroxy-2-butanone 4-phosphate synthase (215 aa).

Residues Arg38–Glu39, Asp43, Arg151–Thr155, and Glu175 contribute to the D-ribulose 5-phosphate site. Glu39 is a Mg(2+) binding site. Residue His154 coordinates Mg(2+).

Belongs to the DHBP synthase family. In terms of assembly, homodimer. The cofactor is Mg(2+). Mn(2+) serves as cofactor.

It catalyses the reaction D-ribulose 5-phosphate = (2S)-2-hydroxy-3-oxobutyl phosphate + formate + H(+). The protein operates within cofactor biosynthesis; riboflavin biosynthesis; 2-hydroxy-3-oxobutyl phosphate from D-ribulose 5-phosphate: step 1/1. Its function is as follows. Catalyzes the conversion of D-ribulose 5-phosphate to formate and 3,4-dihydroxy-2-butanone 4-phosphate. This is 3,4-dihydroxy-2-butanone 4-phosphate synthase from Haemophilus influenzae (strain PittEE).